Consider the following 393-residue polypeptide: MSVPTIREVRAYVVRGGGGDYHDQQGTHWIDDHIATPMSKYPAYRQSRRTFGINVLGTLVVEVEASDGTVGFAVTTGGEPAAWIVEKHLARFIEGAKITDIELMWDQMYRSTLYYGRKGLVVNTISGVDLALWDLLAKWRKEPVYHLLGGAVRDELQFYATGARPDLAKEMGFIGGKMALHHGPAEGEEGLRKNLDILNDMRNKVGKDFWLMQDCWMALDVEYATRFSTIAWNEMGLKWTEEALPPDDYWGYAALKKNAPKGHLITTGEHEATRWGFKMLLDMECCDIIQPDVGWCGGITELIKITALADAAGVLVVPHGSSVYSYHFVITRHNSPFAEFLMMHPVPDQVVPMFTPLLLDEPVPVNGRLKLDDTPGFGVRLNPECKLSRPYTH.

Positions 22 and 48 each coordinate substrate. Asp-214, Glu-241, and Glu-269 together coordinate Mg(2+). His-319 functions as the Proton acceptor in the catalytic mechanism. Glu-339 is a binding site for substrate.

Belongs to the mandelate racemase/muconate lactonizing enzyme family. RhamD subfamily. Homooctamer; tetramer of dimers. Mg(2+) serves as cofactor.

The enzyme catalyses L-rhamnonate = 2-dehydro-3-deoxy-L-rhamnonate + H2O. Its function is as follows. Catalyzes the dehydration of L-rhamnonate to 2-keto-3-deoxy-L-rhamnonate (KDR). This is L-rhamnonate dehydratase from Azorhizobium caulinodans (strain ATCC 43989 / DSM 5975 / JCM 20966 / LMG 6465 / NBRC 14845 / NCIMB 13405 / ORS 571).